Reading from the N-terminus, the 510-residue chain is Inositol-3-phosphate synthase 1 (510 aa).

24 residues coordinate NAD(+): glycine 70, glycine 71, asparagine 72, asparagine 73, aspartate 143, isoleucine 180, glutamine 190, arginine 193, threonine 230, alanine 231, asparagine 232, threonine 233, glycine 281, serine 282, aspartate 306, serine 309, asparagine 340, asparagine 341, aspartate 342, lysine 355, glycine 393, aspartate 394, aspartate 422, and serine 423.

Belongs to the myo-inositol 1-phosphate synthase family. NAD(+) serves as cofactor.

Its subcellular location is the cytoplasm. The protein resides in the cytosol. It localises to the nucleus. It carries out the reaction D-glucose 6-phosphate = 1D-myo-inositol 3-phosphate. It functions in the pathway polyol metabolism; myo-inositol biosynthesis; myo-inositol from D-glucose 6-phosphate: step 1/2. In terms of biological role, key enzyme in myo-inositol biosynthesis pathway that catalyzes the conversion of glucose 6-phosphate to 1-myo-inositol 1-phosphate in a NAD-dependent manner. May play a role in oxidative stress resistance and influences ascorbate levels. The polypeptide is Inositol-3-phosphate synthase 1 (Populus euphratica (Euphrates poplar)).